A 327-amino-acid chain; its full sequence is Malate dehydrogenase (327 aa).

12-18 contacts NAD(+); the sequence is GAAGQIA. 2 residues coordinate substrate: Arg-93 and Arg-99. NAD(+) contacts are provided by residues Asn-106, Gln-113, and 130-132; that span reads VGN. Substrate is bound by residues Asn-132 and Arg-163. The active-site Proton acceptor is His-188.

It belongs to the LDH/MDH superfamily. MDH type 2 family.

It catalyses the reaction (S)-malate + NAD(+) = oxaloacetate + NADH + H(+). Its function is as follows. Catalyzes the reversible oxidation of malate to oxaloacetate. This chain is Malate dehydrogenase, found in Acidiphilium cryptum (strain JF-5).